Reading from the N-terminus, the 38-residue chain is Potassium channel toxin alpha-KTx 3.11 (38 aa).

3 disulfide bridges follow: C8–C28, C14–C33, and C18–C35.

This sequence belongs to the short scorpion toxin superfamily. Potassium channel inhibitor family. Alpha-KTx 03 subfamily. Expressed by the venom gland.

The protein localises to the secreted. Blocks the voltage-gated potassium channel Kv1.3/KCNA3 (IC(50)=7.2 nM). Correnti and colleagues have also shown that this toxin inhibits Kv1.1/KCNA1, which is different from Abdel-Mottaleb and colleagues conclusions. The sequence is that of Potassium channel toxin alpha-KTx 3.11 from Odontobuthus doriae (Yellow Iranian scorpion).